The chain runs to 179 residues: Large ribosomal subunit protein uL5 (179 aa).

This sequence belongs to the universal ribosomal protein uL5 family. In terms of assembly, part of the 50S ribosomal subunit; part of the 5S rRNA/L5/L18/L25 subcomplex. Contacts the 5S rRNA and the P site tRNA. Forms a bridge to the 30S subunit in the 70S ribosome.

Its function is as follows. This is one of the proteins that bind and probably mediate the attachment of the 5S RNA into the large ribosomal subunit, where it forms part of the central protuberance. In the 70S ribosome it contacts protein S13 of the 30S subunit (bridge B1b), connecting the 2 subunits; this bridge is implicated in subunit movement. Contacts the P site tRNA; the 5S rRNA and some of its associated proteins might help stabilize positioning of ribosome-bound tRNAs. The protein is Large ribosomal subunit protein uL5 of Burkholderia cenocepacia (strain HI2424).